The chain runs to 485 residues: Phenylalanine--tRNA ligase alpha subunit, cytoplasmic (485 aa).

L-phenylalanine is bound by residues Thr-318, 360–362 (QIE), and Tyr-400. Glu-402 lines the Mg(2+) pocket. Phe-426 contributes to the L-phenylalanine binding site.

This sequence belongs to the class-II aminoacyl-tRNA synthetase family. Phe-tRNA synthetase alpha subunit type 2 subfamily. Tetramer of two alpha and two beta subunits. Mg(2+) is required as a cofactor.

The protein localises to the cytoplasm. It localises to the cytosol. The catalysed reaction is tRNA(Phe) + L-phenylalanine + ATP = L-phenylalanyl-tRNA(Phe) + AMP + diphosphate + H(+). The chain is Phenylalanine--tRNA ligase alpha subunit, cytoplasmic from Arabidopsis thaliana (Mouse-ear cress).